The primary structure comprises 406 residues: Tyrosine--tRNA ligase (406 aa).

L-tyrosine is bound at residue Y39. Residues 44–53 (PTADSLHVGH) carry the 'HIGH' region motif. Residues Y172 and Q176 each coordinate L-tyrosine. Residues 232-236 (KMGKT) carry the 'KMSKS' region motif. K235 serves as a coordination point for ATP. Residues 344–404 (KELLDVLVDR…LGKKKFYNIV (61 aa)) enclose the S4 RNA-binding domain.

It belongs to the class-I aminoacyl-tRNA synthetase family. TyrS type 1 subfamily. In terms of assembly, homodimer.

Its subcellular location is the cytoplasm. It carries out the reaction tRNA(Tyr) + L-tyrosine + ATP = L-tyrosyl-tRNA(Tyr) + AMP + diphosphate + H(+). Its function is as follows. Catalyzes the attachment of tyrosine to tRNA(Tyr) in a two-step reaction: tyrosine is first activated by ATP to form Tyr-AMP and then transferred to the acceptor end of tRNA(Tyr). This is Tyrosine--tRNA ligase from Fusobacterium nucleatum subsp. nucleatum (strain ATCC 25586 / DSM 15643 / BCRC 10681 / CIP 101130 / JCM 8532 / KCTC 2640 / LMG 13131 / VPI 4355).